The primary structure comprises 308 residues: UDP-N-acetylenolpyruvoylglucosamine reductase (308 aa).

In terms of domain architecture, FAD-binding PCMH-type spans 22–185 (RVGGPADWLF…TEATFRAEAG (164 aa)). The active site involves Arg-165. Over residues 197–211 (QIARRDSSQPTKERS) the composition is skewed to basic and acidic residues. Positions 197–228 (QIARRDSSQPTKERSAGSTFRNPAGFSSTGRA) are disordered. Over residues 212-226 (AGSTFRNPAGFSSTG) the composition is skewed to polar residues. Ser-214 serves as the catalytic Proton donor. Glu-296 is an active-site residue.

Belongs to the MurB family. The cofactor is FAD.

The protein localises to the cytoplasm. It catalyses the reaction UDP-N-acetyl-alpha-D-muramate + NADP(+) = UDP-N-acetyl-3-O-(1-carboxyvinyl)-alpha-D-glucosamine + NADPH + H(+). Its pathway is cell wall biogenesis; peptidoglycan biosynthesis. Its function is as follows. Cell wall formation. In Cereibacter sphaeroides (strain ATCC 17023 / DSM 158 / JCM 6121 / CCUG 31486 / LMG 2827 / NBRC 12203 / NCIMB 8253 / ATH 2.4.1.) (Rhodobacter sphaeroides), this protein is UDP-N-acetylenolpyruvoylglucosamine reductase.